A 700-amino-acid polypeptide reads, in one-letter code: Probable transcription factor FUP6 (700 aa).

2 disordered regions span residues 343–364 (SEAGLGRATSEDESSQKHNRHS) and 577–624 (FDSV…PLNQ). Polar residues predominate over residues 577–595 (FDSVHSGRDSVSSAMNYQS). Positions 596–607 (DSRKRARLDTES) are enriched in basic and acidic residues. Residues 608 to 623 (NPRSSQRNDGSGQPLN) show a composition bias toward polar residues.

The protein resides in the nucleus. Functionally, probable transcrition factor; part of the gene cluster that mediates the biosynthesis of the mycotoxin fusaproliferin (FUP) that belongs to the class of bicyclic sesterterpenoids. The polypeptide is Probable transcription factor FUP6 (Fusarium proliferatum (strain ET1) (Orchid endophyte fungus)).